The following is a 261-amino-acid chain: U1 small nuclear ribonucleoprotein 70 kDa homolog (261 aa).

One can recognise an RRM domain in the interval 100 to 178; it reads KTMFLSRLSY…RRIVVDVERG (79 aa). Residues 192-261 are disordered; it reads GLGGRHYTKE…DSSPKRRRYN (70 aa). Positions 198 to 215 are enriched in basic and acidic residues; the sequence is YTKERPRRERGSRFRGDS. Residues 216–235 are compositionally biased toward gly residues; sequence GFRGGYRGGFRKSSGGGSRF.

In terms of assembly, component of the spliceosome, where it is associated with snRNP U1. Associates with U1 snRNA.

Its subcellular location is the nucleus. In terms of biological role, involved in nuclear mRNA splicing. Essential for growth. The sequence is that of U1 small nuclear ribonucleoprotein 70 kDa homolog from Schizosaccharomyces pombe (strain 972 / ATCC 24843) (Fission yeast).